The chain runs to 299 residues: tRNA pseudouridine synthase B (299 aa).

Residue aspartate 45 is the Nucleophile of the active site.

Belongs to the pseudouridine synthase TruB family. Type 1 subfamily.

It catalyses the reaction uridine(55) in tRNA = pseudouridine(55) in tRNA. Responsible for synthesis of pseudouridine from uracil-55 in the psi GC loop of transfer RNAs. The polypeptide is tRNA pseudouridine synthase B (Streptomyces griseus subsp. griseus (strain JCM 4626 / CBS 651.72 / NBRC 13350 / KCC S-0626 / ISP 5235)).